A 222-amino-acid polypeptide reads, in one-letter code: Polyadenylate-binding protein 2 (222 aa).

Positions 1–43 (MTDNNNGEIVEDKDNEKLKGEDNINNHISNHNNTEETSFEDPE) are disordered. Residues 10–24 (VEDKDNEKLKGEDNI) show a composition bias toward basic and acidic residues. In terms of domain architecture, RRM spans 101–178 (RSVYVGNVDY…RQLKITPKRT (78 aa)).

Its subcellular location is the nucleus. Its function is as follows. Involved in the 3'-end formation of mRNA precursors (pre-mRNA) by the addition of a poly(A) tail of 200-250 nt to the upstream cleavage product. This is Polyadenylate-binding protein 2 (pabpn1) from Dictyostelium discoideum (Social amoeba).